The sequence spans 437 residues: Matrix remodeling-associated protein 8 (437 aa).

An N-terminal signal peptide occupies residues 1-22 (MEQLAKLLLWQLLLQQSSVVYL). Residues 23–339 (YSVPADASNP…PESRIHFFQQ (317 aa)) are Extracellular-facing. Ig-like V-type domains are found at residues 32–159 (PDSV…LDIT) and 167–294 (EYWD…VFVT). Residues asparagine 41, asparagine 121, asparagine 246, and asparagine 304 are each glycosylated (N-linked (GlcNAc...) asparagine). Cystine bridges form between cysteine 54/cysteine 139 and cysteine 188/cysteine 274. Residues 340-360 (LGYVLATLLLFVVLLIIVVFI) traverse the membrane as a helical segment. At 361-437 (TRKRRQRGYE…DKDFRKEYCK (77 aa)) the chain is on the cytoplasmic side.

As to quaternary structure, homodimer in cis. Does not appear to form trans-homodimers.

The protein localises to the cell membrane. Transmembrane protein which can modulate activity of various signaling pathways, probably via binding to integrin ITGAV:ITGB3. Mediates heterophilic cell-cell interactions in vitro. The protein is Matrix remodeling-associated protein 8 (MXRA8) of Gallus gallus (Chicken).